The sequence spans 306 residues: Ornithine carbamoyltransferase (306 aa).

Carbamoyl phosphate contacts are provided by residues 53–56 (STRT), glutamine 80, arginine 104, and 131–134 (HPCQ). L-ornithine contacts are provided by residues asparagine 162, aspartate 219, and 223–224 (SM). Carbamoyl phosphate contacts are provided by residues 259–260 (CL) and arginine 287.

The protein belongs to the aspartate/ornithine carbamoyltransferase superfamily. OTCase family.

The protein localises to the cytoplasm. It carries out the reaction carbamoyl phosphate + L-ornithine = L-citrulline + phosphate + H(+). It participates in amino-acid biosynthesis; L-arginine biosynthesis; L-arginine from L-ornithine and carbamoyl phosphate: step 1/3. Reversibly catalyzes the transfer of the carbamoyl group from carbamoyl phosphate (CP) to the N(epsilon) atom of ornithine (ORN) to produce L-citrulline. The chain is Ornithine carbamoyltransferase from Pseudomonas syringae pv. tomato (strain ATCC BAA-871 / DC3000).